A 212-amino-acid chain; its full sequence is Ribonuclease HII (212 aa).

The 194-residue stretch at Cys19–Ser212 folds into the RNase H type-2 domain. The a divalent metal cation site is built by Asp25, Glu26, and Asp120.

This sequence belongs to the RNase HII family. Mn(2+) is required as a cofactor. Mg(2+) serves as cofactor.

The protein resides in the cytoplasm. It carries out the reaction Endonucleolytic cleavage to 5'-phosphomonoester.. Its function is as follows. Endonuclease that specifically degrades the RNA of RNA-DNA hybrids. This chain is Ribonuclease HII, found in Ehrlichia ruminantium (strain Welgevonden).